The chain runs to 346 residues: Pheromone receptor 2 (346 aa).

A run of 7 helical transmembrane segments spans residues 8–28 (VSFG…CLIH), 34–54 (IGVL…GINA), 71–94 (LSAI…LQRL), 115–135 (LIDF…FFIV), 160–180 (FIYH…AVLV), 219–239 (VLVS…GGLL), and 270–290 (LSIL…FFGL).

The protein belongs to the G-protein coupled receptor 4 family.

The protein localises to the membrane. Functionally, receptor for the A1 pheromone, a prenylated mating factor. The chain is Pheromone receptor 2 (PRA2) from Mycosarcoma maydis (Corn smut fungus).